A 1226-amino-acid chain; its full sequence is Arf guanine nucleotide exchange factor SYT1 (1226 aa).

Disordered stretches follow at residues 17–39 (HSND…DKLR) and 113–158 (RNGQ…RNSK). The segment covering 131-142 (SIEKVPKPDGER) has biased composition (basic and acidic residues). Residue Thr277 is modified to Phosphothreonine. Disordered stretches follow at residues 311–405 (NSLM…TGMS), 954–1022 (STGS…NEDY), and 1178–1198 (LEHG…DGID). The segment covering 349-360 (LSRSRSQSTSFV) has biased composition (polar residues). Ser369 carries the phosphoserine modification. Positions 386–405 (GPTSVYNNKSNANSTITGMS) are enriched in polar residues. In terms of domain architecture, SEC7 spans 405–620 (SRRSSSIVNA…TYFYENVTAK (216 aa)). The PH domain maps to 844–1074 (ILQMGAIMNL…DSINLFSAYD (231 aa)). Composition is skewed to low complexity over residues 956–969 (GSHT…SSSA) and 994–1017 (SSVS…SSND).

It is found in the cytoplasm. With respect to regulation, inhibited by brefeldin A. In terms of biological role, guanine nucleotide exchange factor for Arf GTPases, stimulating the nucleotide exchange from the GDP-bound to the GTP-bound form. Catalyzes both the GDP release by and the GTP binding to ARF2. Has no exchange activity on Rab GTPases. Involved in vesicular transport. The polypeptide is Arf guanine nucleotide exchange factor SYT1 (SYT1) (Saccharomyces cerevisiae (strain ATCC 204508 / S288c) (Baker's yeast)).